Here is a 257-residue protein sequence, read N- to C-terminus: Zinc transporter ZupT (257 aa).

Helical transmembrane passes span 5–25 (LILT…GVLG), 32–52 (LLAF…LMEM), and 61–81 (GMSP…YFGL). Asparagine 120 and glutamate 123 together coordinate Fe(2+). Residues glutamate 123 and histidine 148 each coordinate Zn(2+). Helical transmembrane passes span 137–157 (LGFG…LAVA), 171–191 (ILWA…AWLI), 195–215 (MISP…MVAL), and 236–256 (GVLC…TAGI). Fe(2+) is bound by residues asparagine 149, glutamate 152, and glutamate 181. Residue glutamate 152 coordinates Zn(2+).

It belongs to the ZIP transporter (TC 2.A.5) family. ZupT subfamily.

The protein resides in the cell inner membrane. The enzyme catalyses Zn(2+)(in) = Zn(2+)(out). Mediates zinc uptake. May also transport other divalent cations. The chain is Zinc transporter ZupT from Escherichia coli O127:H6 (strain E2348/69 / EPEC).